The primary structure comprises 278 residues: 4-diphosphocytidyl-2-C-methyl-D-erythritol kinase (278 aa).

Lys-9 is an active-site residue. 93-103 (PISAGLAGGSS) provides a ligand contact to ATP. The active site involves Asp-135.

The protein belongs to the GHMP kinase family. IspE subfamily.

It catalyses the reaction 4-CDP-2-C-methyl-D-erythritol + ATP = 4-CDP-2-C-methyl-D-erythritol 2-phosphate + ADP + H(+). Its pathway is isoprenoid biosynthesis; isopentenyl diphosphate biosynthesis via DXP pathway; isopentenyl diphosphate from 1-deoxy-D-xylulose 5-phosphate: step 3/6. Catalyzes the phosphorylation of the position 2 hydroxy group of 4-diphosphocytidyl-2C-methyl-D-erythritol. In Finegoldia magna (strain ATCC 29328 / DSM 20472 / WAL 2508) (Peptostreptococcus magnus), this protein is 4-diphosphocytidyl-2-C-methyl-D-erythritol kinase.